The chain runs to 110 residues: Insulin (110 aa).

A signal peptide spans 1–24 (MAPWTRLLPLLALLSLWIPAPTRA). 3 disulfides stabilise this stretch: cysteine 31–cysteine 96, cysteine 43–cysteine 109, and cysteine 95–cysteine 100. A propeptide spans 57 to 87 (EAEDLQGKDAELGEAPGAGGLQPSALEAPLQ) (c peptide). The interval 60-80 (DLQGKDAELGEAPGAGGLQPS) is disordered.

Belongs to the insulin family. As to quaternary structure, heterodimer of a B chain and an A chain linked by two disulfide bonds.

It localises to the secreted. Insulin decreases blood glucose concentration. It increases cell permeability to monosaccharides, amino acids and fatty acids. It accelerates glycolysis, the pentose phosphate cycle, and glycogen synthesis in liver. This chain is Insulin (INS), found in Felis catus (Cat).